We begin with the raw amino-acid sequence, 155 residues long: Chaperone protein IpgC (155 aa).

The protein belongs to the LcrH/SycD chaperone family.

It localises to the cytoplasm. Its function is as follows. Assists the correct folding of nascent IpaB. Once it is bound to IpaB, it binds to IpaC and impedes their premature association that would lead to their degradation in the absence of IpcG. In Shigella dysenteriae, this protein is Chaperone protein IpgC (ipgC).